Reading from the N-terminus, the 332-residue chain is Adenosine deaminase (332 aa).

2 residues coordinate Zn(2+): His-12 and His-14. Substrate-binding residues include His-14, Asp-16, and Gly-169. His-196 provides a ligand contact to Zn(2+). Residue Glu-199 is the Proton donor of the active site. Asp-277 provides a ligand contact to Zn(2+).

The protein belongs to the metallo-dependent hydrolases superfamily. Adenosine and AMP deaminases family. Adenosine deaminase subfamily. Zn(2+) is required as a cofactor.

The enzyme catalyses adenosine + H2O + H(+) = inosine + NH4(+). It catalyses the reaction 2'-deoxyadenosine + H2O + H(+) = 2'-deoxyinosine + NH4(+). Functionally, catalyzes the hydrolytic deamination of adenosine and 2-deoxyadenosine. This Vibrio atlanticus (strain LGP32) (Vibrio splendidus (strain Mel32)) protein is Adenosine deaminase.